We begin with the raw amino-acid sequence, 255 residues long: Transcription factor CAULIFLOWER (255 aa).

Residues 1-61 (MGRGRVELKR…GKLFEYSSES (61 aa)) form the MADS-box domain. Residues 90-180 (QTNWSMEYSR…TKQIKERENI (91 aa)) enclose the K-box domain. Positions 90 to 198 (QTNWSMEYSR…EQLNRSVDDV (109 aa)) form a coiled coil.

In terms of assembly, homodimer capable of binding to CArG-box sequences. Expressed in young flower primordia.

Its subcellular location is the nucleus. In terms of biological role, probable transcription factor that promotes early floral meristem identity in synergy with APETALA1, FRUITFULL and LEAFY. Is required subsequently for the transition of an inflorescence meristem into a floral meristem. Seems to be partially redundant to the function of APETALA1. Positively regulates the APETALA1 and LEAFY expression. The polypeptide is Transcription factor CAULIFLOWER (CAL) (Arabidopsis thaliana (Mouse-ear cress)).